Consider the following 300-residue polypeptide: Cell surface glycoprotein CD200 receptor 1-A (300 aa).

Positions 1 to 24 are cleaved as a signal peptide; sequence MEIAGKAVCVFLLLAIIKLRRSEG. The Ig-like V-type domain occupies 25–124; it reads INRVSANLGH…GNFHRLYHLT (100 aa). The Extracellular portion of the chain corresponds to 25–213; sequence INRVSANLGH…SINCSSSYRD (189 aa). 2 cysteine pairs are disulfide-bonded: Cys40-Cys108 and Cys143-Cys192. Asn45, Asn76, Asn105, Asn171, Asn200, and Asn206 each carry an N-linked (GlcNAc...) asparagine glycan. The Ig-like C2-type domain occupies 122 to 206; that stretch reads HLTVIVAPRM…ATLNETKSIN (85 aa). A helical membrane pass occupies residues 214–234; that stretch reads LILCIAIILSFLIIITFMAVI. Topologically, residues 235 to 300 are cytoplasmic; that stretch reads YYLKLHGCRF…NLPQGQSPAT (66 aa).

It belongs to the CD200R family. Glycosylated. In terms of processing, phosphorylated. In terms of tissue distribution, highly expressed in macrophages, peripheral blood lymphocytes (PBL) and peripheral blood mononuclear cells (PBMC). Weakly expressed in bursa, thymus, spleen, liver and brain.

The protein resides in the membrane. Its subcellular location is the secreted. This is Cell surface glycoprotein CD200 receptor 1-A (CD200R1A) from Gallus gallus (Chicken).